The following is a 236-amino-acid chain: Nopaline transport system permease protein NocQ (236 aa).

Positions 21–222 constitute an ABC transmembrane type-1 domain; the sequence is AMMTVVVAAC…LLSSVSNRGF (202 aa). 4 helical membrane-spanning segments follow: residues 25-45, 63-83, 102-122, and 199-219; these read VVVA…FAAA, VVRG…GGTL, IFVI…TEVI, and QPFT…SVSN.

It belongs to the binding-protein-dependent transport system permease family. HisMQ subfamily.

It is found in the cell inner membrane. In terms of biological role, component of the nopaline active transport system probably consisting of four subunits: Q, M, P and T. This system is also capable of transporting octopine provided that catabolic functions are induced with nopaline. This Agrobacterium fabrum (strain C58 / ATCC 33970) (Agrobacterium tumefaciens (strain C58)) protein is Nopaline transport system permease protein NocQ (nocQ).